The chain runs to 122 residues: Large ribosomal subunit protein uL14 (122 aa).

This sequence belongs to the universal ribosomal protein uL14 family. In terms of assembly, part of the 50S ribosomal subunit. Forms a cluster with proteins L3 and L19. In the 70S ribosome, L14 and L19 interact and together make contacts with the 16S rRNA in bridges B5 and B8.

In terms of biological role, binds to 23S rRNA. Forms part of two intersubunit bridges in the 70S ribosome. This is Large ribosomal subunit protein uL14 from Acinetobacter baylyi (strain ATCC 33305 / BD413 / ADP1).